Here is a 388-residue protein sequence, read N- to C-terminus: Chaperone protein DnaJ (388 aa).

The region spanning 5–70 (DYYEVLGVAR…QKRAAYDRFG (66 aa)) is the J domain. Residues 141-219 (GKTETIRLPT…CGGAGRVTRE (79 aa)) form a CR-type zinc finger. Cys154, Cys157, Cys171, Cys174, Cys193, Cys196, Cys207, and Cys210 together coordinate Zn(2+). CXXCXGXG motif repeat units lie at residues 154–161 (CEVCAGSG), 171–178 (CPTCGGYG), 193–200 (CPNCHGRG), and 207–214 (CTACGGAG).

This sequence belongs to the DnaJ family. Homodimer. Zn(2+) serves as cofactor.

It is found in the cytoplasm. Participates actively in the response to hyperosmotic and heat shock by preventing the aggregation of stress-denatured proteins and by disaggregating proteins, also in an autonomous, DnaK-independent fashion. Unfolded proteins bind initially to DnaJ; upon interaction with the DnaJ-bound protein, DnaK hydrolyzes its bound ATP, resulting in the formation of a stable complex. GrpE releases ADP from DnaK; ATP binding to DnaK triggers the release of the substrate protein, thus completing the reaction cycle. Several rounds of ATP-dependent interactions between DnaJ, DnaK and GrpE are required for fully efficient folding. Also involved, together with DnaK and GrpE, in the DNA replication of plasmids through activation of initiation proteins. This chain is Chaperone protein DnaJ, found in Methylobacterium nodulans (strain LMG 21967 / CNCM I-2342 / ORS 2060).